The chain runs to 443 residues: Probable glycine dehydrogenase (decarboxylating) subunit 1 (443 aa).

The protein belongs to the GcvP family. N-terminal subunit subfamily. The glycine cleavage system is composed of four proteins: P, T, L and H. In this organism, the P 'protein' is a heterodimer of two subunits.

It carries out the reaction N(6)-[(R)-lipoyl]-L-lysyl-[glycine-cleavage complex H protein] + glycine + H(+) = N(6)-[(R)-S(8)-aminomethyldihydrolipoyl]-L-lysyl-[glycine-cleavage complex H protein] + CO2. Functionally, the glycine cleavage system catalyzes the degradation of glycine. The P protein binds the alpha-amino group of glycine through its pyridoxal phosphate cofactor; CO(2) is released and the remaining methylamine moiety is then transferred to the lipoamide cofactor of the H protein. The sequence is that of Probable glycine dehydrogenase (decarboxylating) subunit 1 from Nitratidesulfovibrio vulgaris (strain DP4) (Desulfovibrio vulgaris).